The sequence spans 123 residues: Large ribosomal subunit protein bL12 (123 aa).

Belongs to the bacterial ribosomal protein bL12 family. As to quaternary structure, homodimer. Part of the ribosomal stalk of the 50S ribosomal subunit. Forms a multimeric L10(L12)X complex, where L10 forms an elongated spine to which 2 to 4 L12 dimers bind in a sequential fashion. Binds GTP-bound translation factors.

Its function is as follows. Forms part of the ribosomal stalk which helps the ribosome interact with GTP-bound translation factors. Is thus essential for accurate translation. The chain is Large ribosomal subunit protein bL12 from Parvibaculum lavamentivorans (strain DS-1 / DSM 13023 / NCIMB 13966).